Reading from the N-terminus, the 776-residue chain is Ribosomal RNA large subunit methyltransferase K/L (776 aa).

Residues 68 to 183 (DLYKICLWSR…DKQAELYLDL (116 aa)) form the THUMP domain.

This sequence belongs to the methyltransferase superfamily. RlmKL family.

The protein localises to the cytoplasm. It carries out the reaction guanosine(2445) in 23S rRNA + S-adenosyl-L-methionine = N(2)-methylguanosine(2445) in 23S rRNA + S-adenosyl-L-homocysteine + H(+). The catalysed reaction is guanosine(2069) in 23S rRNA + S-adenosyl-L-methionine = N(2)-methylguanosine(2069) in 23S rRNA + S-adenosyl-L-homocysteine + H(+). In terms of biological role, specifically methylates the guanine in position 2445 (m2G2445) and the guanine in position 2069 (m7G2069) of 23S rRNA. In Psychrobacter cryohalolentis (strain ATCC BAA-1226 / DSM 17306 / VKM B-2378 / K5), this protein is Ribosomal RNA large subunit methyltransferase K/L.